Here is a 257-residue protein sequence, read N- to C-terminus: UPF0246 protein CLH_2088 (257 aa).

It belongs to the UPF0246 family.

In Clostridium botulinum (strain Alaska E43 / Type E3), this protein is UPF0246 protein CLH_2088.